Reading from the N-terminus, the 198-residue chain is MKKILLSLCFLSSVAFASPQGELTDRLNQNKGFEASFTQKVLSPEGDVLMQGEGDVKILRPNLFRWHTQTPDENLLVTDGKTLWYYNPFVEQVTLMGLDQATTQTPFVLLTRNKASDWDNYSVAQNGDAFTVSPKSDSAIKSEFIVRIQPSGKVTGFSVVEQDGQRSDFNFTTFEAKKPAQSNFMFTVPDGVDIDDQR.

An N-terminal signal peptide occupies residues 1 to 17; the sequence is MKKILLSLCFLSSVAFA.

This sequence belongs to the LolA family. Monomer.

The protein resides in the periplasm. Its function is as follows. Participates in the translocation of lipoproteins from the inner membrane to the outer membrane. Only forms a complex with a lipoprotein if the residue after the N-terminal Cys is not an aspartate (The Asp acts as a targeting signal to indicate that the lipoprotein should stay in the inner membrane). The sequence is that of Outer-membrane lipoprotein carrier protein from Aliivibrio salmonicida (strain LFI1238) (Vibrio salmonicida (strain LFI1238)).